Consider the following 381-residue polypeptide: Mannitol-1-phosphate 5-dehydrogenase (381 aa).

NAD(+) is bound at residue 3 to 14; sequence TLHFGAGNIGRG.

It belongs to the mannitol dehydrogenase family.

The catalysed reaction is D-mannitol 1-phosphate + NAD(+) = beta-D-fructose 6-phosphate + NADH + H(+). This is Mannitol-1-phosphate 5-dehydrogenase from Aeromonas salmonicida (strain A449).